We begin with the raw amino-acid sequence, 241 residues long: Transcription factor HEC1 (241 aa).

The bHLH domain maps to isoleucine 128–leucine 177.

As to quaternary structure, homodimer. Interacts with SPT. Interacts with BZIP30. Flowers, especially in gynoecium.

The protein resides in the nucleus. Functionally, required for the female reproductive tract development and fertility. The sequence is that of Transcription factor HEC1 (HEC1) from Arabidopsis thaliana (Mouse-ear cress).